The primary structure comprises 230 residues: 3-beta-hydroxysteroid-Delta(8),Delta(7)-isomerase (230 aa).

The residue at position 2 (T2) is an N-acetylthreonine. A run of 4 helical transmembrane segments spans residues 29–49 (SHIL…TWLL), 66–86 (LCWF…FSLY), 121–141 (METV…IAFL), and 185–205 (FWFY…ILVL). Residues 61-204 (GRRLALCWFA…VWLVIPSILV (144 aa)) enclose the EXPERA domain.

Belongs to the EBP family.

It localises to the endoplasmic reticulum membrane. It is found in the nucleus envelope. The protein localises to the cytoplasmic vesicle. It catalyses the reaction lathosterol = 5alpha-cholest-8-en-3beta-ol. The catalysed reaction is zymosterol = 5alpha-cholesta-7,24-dien-3beta-ol. It carries out the reaction 5,6alpha-epoxy-5alpha-cholestan-3beta-ol + H2O = 5alpha-cholestane-3beta,5,6beta-triol. The enzyme catalyses 5,6beta-epoxy-5beta-cholestan-3beta-ol + H2O = 5alpha-cholestane-3beta,5,6beta-triol. It functions in the pathway steroid biosynthesis; cholesterol biosynthesis. Functionally, isomerase that catalyzes the conversion of Delta(8)-sterols to their corresponding Delta(7)-isomers. Its function is as follows. Component of the microsomal antiestrogen binding site (AEBS), a multiproteic complex at the ER membrane that consists of an association between EBP and 7-dehydrocholesterol reductase/DHCR7. This complex is responsible for cholesterol-5,6-epoxide hydrolase (ChEH) activity, which consists in the hydration of cholesterol-5,6-epoxides (5,6-EC) into cholestane-3beta,5alpha,6beta-triol (CT). The precise role of each component of this complex has not been described yet. The protein is 3-beta-hydroxysteroid-Delta(8),Delta(7)-isomerase of Mus musculus (Mouse).